Here is a 135-residue protein sequence, read N- to C-terminus: Cytochrome c oxidase subunit 2 (135 aa).

Cu cation-binding residues include H81, C116, C120, and H124.

Belongs to the cytochrome c oxidase subunit 2 family.

The protein resides in the cell membrane. The enzyme catalyses 4 Fe(II)-[cytochrome c] + O2 + 8 H(+)(in) = 4 Fe(III)-[cytochrome c] + 2 H2O + 4 H(+)(out). Its function is as follows. Subunits I and II form the functional core of the enzyme complex. Electrons originating in cytochrome c are transferred via heme a and Cu(A) to the binuclear center formed by heme a3 and Cu(B). The polypeptide is Cytochrome c oxidase subunit 2 (cbaB) (Thermus thermophilus).